We begin with the raw amino-acid sequence, 316 residues long: Adenine deaminase (316 aa).

Zn(2+)-binding residues include H14, H16, and H194. E197 acts as the Proton donor in catalysis. D275 contributes to the Zn(2+) binding site. D276 is a substrate binding site.

The protein belongs to the metallo-dependent hydrolases superfamily. Adenosine and AMP deaminases family. Adenine deaminase type 2 subfamily. It depends on Zn(2+) as a cofactor.

It catalyses the reaction adenine + H2O + H(+) = hypoxanthine + NH4(+). Catalyzes the hydrolytic deamination of adenine to hypoxanthine. Plays an important role in the purine salvage pathway and in nitrogen catabolism. This chain is Adenine deaminase, found in Pseudomonas entomophila (strain L48).